We begin with the raw amino-acid sequence, 685 residues long: Threonine--tRNA ligase (685 aa).

A TGS domain is found at 1 to 65; it reads MSTPASAAPA…DTDVEVEPVA (65 aa). Positions 262–568 are catalytic; it reads DHRKLGSELD…LTEHYAGAFP (307 aa). Residues C367, H418, and H545 each coordinate Zn(2+).

The protein belongs to the class-II aminoacyl-tRNA synthetase family. Homodimer. The cofactor is Zn(2+).

It is found in the cytoplasm. The catalysed reaction is tRNA(Thr) + L-threonine + ATP = L-threonyl-tRNA(Thr) + AMP + diphosphate + H(+). Its function is as follows. Catalyzes the attachment of threonine to tRNA(Thr) in a two-step reaction: L-threonine is first activated by ATP to form Thr-AMP and then transferred to the acceptor end of tRNA(Thr). Also edits incorrectly charged L-seryl-tRNA(Thr). This is Threonine--tRNA ligase from Rhodococcus jostii (strain RHA1).